The following is a 205-amino-acid chain: NADH dehydrogenase (205 aa).

FMN contacts are provided by residues 17–21 (RRSIR), glutamine 73, 158–159 (LG), and arginine 195.

It belongs to the nitroreductase family. In terms of assembly, homodimer. FMN is required as a cofactor.

The catalysed reaction is a ubiquinone + NADH + 5 H(+)(in) = a ubiquinol + NAD(+) + 4 H(+)(out). In terms of biological role, can oxidize either NADH or NADPH with a preference for NADH. Can catalyze electron transfer from NADH to various electron acceptors which include, in addition to molecular oxygen, cytochrome c, 2,6 dichlorphenolindophenol, methylene blue, ferricyanide or P-nitroblue tetrazolium. In Thermus thermophilus (strain ATCC 27634 / DSM 579 / HB8), this protein is NADH dehydrogenase (nox).